The chain runs to 139 residues: Large ribosomal subunit protein bL17 (139 aa).

The disordered stretch occupies residues 120 to 139 (ESAKGQDSGPVHVEGDEEAA).

It belongs to the bacterial ribosomal protein bL17 family. In terms of assembly, part of the 50S ribosomal subunit. Contacts protein L32.

The protein is Large ribosomal subunit protein bL17 of Parvibaculum lavamentivorans (strain DS-1 / DSM 13023 / NCIMB 13966).